Here is a 241-residue protein sequence, read N- to C-terminus: DNA repair protein RecO (241 aa).

The protein belongs to the RecO family.

Its function is as follows. Involved in DNA repair and RecF pathway recombination. This is DNA repair protein RecO from Ruegeria sp. (strain TM1040) (Silicibacter sp.).